A 330-amino-acid polypeptide reads, in one-letter code: MSNYFSMEAFDYDDIQLIPNKGIIKSRRDADTSVKFGNRTFKIPVVPANMESVIDDKLAVWLAENDYYYVMHRFEPEKRIPFIKMMHEKGLFASISVGIKDSEYDFIDELVKQNLKPEYITIDVAHGHSVYVIKMIKYIKEKLPNSFLTAGNIATPEAVRELENAGADATKVGVGPGKACITKLKTGFGTGGWQLAALRMCSKVASKPLIADGGIRHNGDIAKSVRFGASMVMIGSMLAGHEESPGNVIKIDGKTFKQYWGSASEVQKGAYKNVEGKQMLVPYRGSIKDTLREMQEDLQSAISYAGGRELNSIKLVDYVIVKDNIFDGDK.

Cysteine 180 serves as the catalytic Thioimidate intermediate. Position 209-232 (209-232 (LIADGGIRHNGDIAKSVRFGASMV)) interacts with NADP(+).

It belongs to the IMPDH/GMPR family. GuaC type 2 subfamily.

The enzyme catalyses IMP + NH4(+) + NADP(+) = GMP + NADPH + 2 H(+). In terms of biological role, catalyzes the irreversible NADPH-dependent deamination of GMP to IMP. It functions in the conversion of nucleobase, nucleoside and nucleotide derivatives of G to A nucleotides, and in maintaining the intracellular balance of A and G nucleotides. The sequence is that of GMP reductase from Lactobacillus acidophilus (strain ATCC 700396 / NCK56 / N2 / NCFM).